The chain runs to 191 residues: dTTP/UTP pyrophosphatase (191 aa).

The active-site Proton acceptor is D71.

Belongs to the Maf family. YhdE subfamily. Requires a divalent metal cation as cofactor.

The protein resides in the cytoplasm. It catalyses the reaction dTTP + H2O = dTMP + diphosphate + H(+). The catalysed reaction is UTP + H2O = UMP + diphosphate + H(+). Its function is as follows. Nucleoside triphosphate pyrophosphatase that hydrolyzes dTTP and UTP. May have a dual role in cell division arrest and in preventing the incorporation of modified nucleotides into cellular nucleic acids. The protein is dTTP/UTP pyrophosphatase of Geobacter sulfurreducens (strain ATCC 51573 / DSM 12127 / PCA).